The chain runs to 74 residues: Exodeoxyribonuclease 7 small subunit (74 aa).

It belongs to the XseB family. Heterooligomer composed of large and small subunits.

It is found in the cytoplasm. The enzyme catalyses Exonucleolytic cleavage in either 5'- to 3'- or 3'- to 5'-direction to yield nucleoside 5'-phosphates.. In terms of biological role, bidirectionally degrades single-stranded DNA into large acid-insoluble oligonucleotides, which are then degraded further into small acid-soluble oligonucleotides. The chain is Exodeoxyribonuclease 7 small subunit from Symbiobacterium thermophilum (strain DSM 24528 / JCM 14929 / IAM 14863 / T).